The primary structure comprises 135 residues: Transcription antitermination protein NusB (135 aa).

Belongs to the NusB family.

Involved in transcription antitermination. Required for transcription of ribosomal RNA (rRNA) genes. Binds specifically to the boxA antiterminator sequence of the ribosomal RNA (rrn) operons. The protein is Transcription antitermination protein NusB of Nocardioides sp. (strain ATCC BAA-499 / JS614).